The chain runs to 337 residues: Fructose-1,6-bisphosphatase class 1 (337 aa).

Mg(2+) is bound by residues glutamate 89, aspartate 112, leucine 114, and aspartate 115. Substrate contacts are provided by residues 115–118 (DGSS), asparagine 208, tyrosine 241, and lysine 271. Glutamate 277 lines the Mg(2+) pocket.

The protein belongs to the FBPase class 1 family. Homotetramer. Mg(2+) is required as a cofactor.

The protein resides in the cytoplasm. It carries out the reaction beta-D-fructose 1,6-bisphosphate + H2O = beta-D-fructose 6-phosphate + phosphate. It participates in carbohydrate biosynthesis; gluconeogenesis. The sequence is that of Fructose-1,6-bisphosphatase class 1 from Yersinia pestis bv. Antiqua (strain Antiqua).